A 234-amino-acid chain; its full sequence is Sugar fermentation stimulation protein A (234 aa).

Positions 201-220 (LLTEAQQRGVEILAYKAEIS) form a DNA-binding region, H-T-H motif.

Belongs to the SfsA family.

Binds to DNA non-specifically. Could be a regulatory factor involved in maltose metabolism. The protein is Sugar fermentation stimulation protein A of Escherichia fergusonii (strain ATCC 35469 / DSM 13698 / CCUG 18766 / IAM 14443 / JCM 21226 / LMG 7866 / NBRC 102419 / NCTC 12128 / CDC 0568-73).